Reading from the N-terminus, the 311-residue chain is Olfactory receptor 8G1 (311 aa).

Over 1 to 25 (MSGENNSSVTEFILAGLSEQPELQL) the chain is Extracellular. N-linked (GlcNAc...) asparagine glycans are attached at residues Asn-5 and Asn-6. Residues 26–46 (PLFLLFLGIYVVTVVGNLGMT) form a helical membrane-spanning segment. Residues 47-54 (TLIWLSSH) lie on the Cytoplasmic side of the membrane. The helical transmembrane segment at 55 to 75 (LHTPMYYFLSSLSFIDFCHST) threads the bilayer. Residues 76-99 (VITPKMLVNFVTEKNIISYPECMT) are Extracellular-facing. Cys-97 and Cys-189 are disulfide-bonded. A helical transmembrane segment spans residues 100–120 (QLYFFLVFAIAECHMLAAMAY). Topologically, residues 121–139 (DRYMAICSPLLYSVIISNK) are cytoplasmic. The chain crosses the membrane as a helical span at residues 140-160 (ACFSLILGVYIIGLVCASVHT). Residues 161–197 (GCMFRVQFCKFDLINHYFCDLLPLLKLSCSSIYVNKL) lie on the Extracellular side of the membrane. Residues 198–217 (LILCVGAFNILVPSLTILCS) traverse the membrane as a helical segment. At 218 to 237 (YIFIIASILHIRSTEGRSKA) the chain is on the cytoplasmic side. The chain crosses the membrane as a helical span at residues 238-258 (FSTCSSHMLAVVIFFGSAAFM). Over 259 to 271 (YLQPSSISSMDQG) the chain is Extracellular. Residues 272–292 (KVSSVFYTIIVPMLNPLIYSL) form a helical membrane-spanning segment. Topologically, residues 293-311 (RNKDVHVSLKKMLQRRTLL) are cytoplasmic.

It belongs to the G-protein coupled receptor 1 family.

It is found in the cell membrane. Odorant receptor. This is Olfactory receptor 8G1 (OR8G1) from Homo sapiens (Human).